A 620-amino-acid polypeptide reads, in one-letter code: Tyrosine-protein kinase ITK/TSK (620 aa).

In terms of domain architecture, PH spans 4 to 111 (FILLEEQLIK…WVLALKEETR (108 aa)). The segment at 113 to 149 (NNSLVPKYHPNFWMDGKWRCCSQLEKLATGCAQYDPT) adopts a Btk-type zinc-finger fold. Positions 121, 132, 133, and 143 each coordinate Zn(2+). The 61-residue stretch at 171-231 (PEETVVIALY…PSSYLVEKSP (61 aa)) folds into the SH3 domain. Tyr-180 carries the post-translational modification Phosphotyrosine; by autocatalysis. The SH2 domain maps to 239 to 338 (WYNKSISRDK…GLVTRLRYPV (100 aa)). The Protein kinase domain maps to 363 to 615 (LTFVQEIGSG…SRLLRQLAEI (253 aa)). ATP-binding positions include 369-377 (IGSGQFGLV) and Lys-391. The active-site Proton acceptor is Asp-482. Residue Tyr-512 is modified to Phosphotyrosine; by LCK. The residue at position 565 (Ser-565) is a Phosphoserine.

Belongs to the protein kinase superfamily. Tyr protein kinase family. TEC subfamily. As to quaternary structure, homooligomerizes; this association negatively regulates kinase activity. Interacts with PPIA/CYPA; this interaction regulates TCR signal strength via a proline-directed conformational switch in ITK. Interacts with THEMIS. Interacts with FASLG. Interacts with VAV1; this interaction is important for VAV1 localization and TCR-induced actin polarization. Interacts with TBX21. Zn(2+) is required as a cofactor. Phosphorylated at Tyr-512 in the activation loop of the kinase domain by LCK. Subsequent autophosphorylation at Tyr-180 leads to the kinase activation. The autophosphorylated Tyr-180 lies within the substrate binding sequence of the SH3 domain. In terms of processing, ubiquitinated. As to expression, T-cell lines and natural killer cell lines.

It localises to the cytoplasm. Its subcellular location is the nucleus. The enzyme catalyses L-tyrosyl-[protein] + ATP = O-phospho-L-tyrosyl-[protein] + ADP + H(+). Functionally, tyrosine kinase that plays an essential role in regulation of the adaptive immune response. Regulates the development, function and differentiation of conventional T-cells and nonconventional NKT-cells. When antigen presenting cells (APC) activate T-cell receptor (TCR), a series of phosphorylation lead to the recruitment of ITK to the cell membrane, in the vicinity of the stimulated TCR receptor, where it is phosphorylated by LCK. Phosphorylation leads to ITK autophosphorylation and full activation. Once activated, phosphorylates PLCG1, leading to the activation of this lipase and subsequent cleavage of its substrates. In turn, the endoplasmic reticulum releases calcium in the cytoplasm and the nuclear activator of activated T-cells (NFAT) translocates into the nucleus to perform its transcriptional duty. Phosphorylates 2 essential adapter proteins: the linker for activation of T-cells/LAT protein and LCP2. Then, a large number of signaling molecules such as VAV1 are recruited and ultimately lead to lymphokine production, T-cell proliferation and differentiation. Required for TCR-mediated calcium response in gamma-delta T-cells, may also be involved in the modulation of the transcriptomic signature in the Vgamma2-positive subset of immature gamma-delta T-cells. Phosphorylates TBX21 at 'Tyr-530' and mediates its interaction with GATA3. In Homo sapiens (Human), this protein is Tyrosine-protein kinase ITK/TSK (ITK).